We begin with the raw amino-acid sequence, 378 residues long: 3-hydroxyisobutyryl-CoA hydrolase 1 (378 aa).

Alanine 2 carries the post-translational modification N-acetylalanine. Residues glutamate 94, glycine 119, glutamate 142, and aspartate 150 each coordinate substrate.

The protein belongs to the enoyl-CoA hydratase/isomerase family. As to expression, expressed in roots, leaves, flowers and siliques.

The protein resides in the peroxisome. It carries out the reaction 3-hydroxy-2-methylpropanoyl-CoA + H2O = 3-hydroxy-2-methylpropanoate + CoA + H(+). It functions in the pathway amino-acid degradation; L-valine degradation. Inhibited by copper. Involved in valine catabolism. May be indirectly involved in benzoic acid biosynthesis and in cold signaling and cold tolerance. This is 3-hydroxyisobutyryl-CoA hydrolase 1 (CHY1) from Arabidopsis thaliana (Mouse-ear cress).